We begin with the raw amino-acid sequence, 353 residues long: uncharacterized protein (353 aa).

A compositionally biased stretch (polar residues) spans 233–245 (ASCSNNEPSASLE). The interval 233-265 (ASCSNNEPSASLESESRHFSPVNSLSPSSLSTD) is disordered. Residues 252–263 (SPVNSLSPSSLS) are compositionally biased toward low complexity.

This is an uncharacterized protein from Saccharomyces cerevisiae (strain ATCC 204508 / S288c) (Baker's yeast).